Consider the following 542-residue polypeptide: Chaperonin GroEL (542 aa).

ATP is bound by residues 29 to 32 (TLGP), 86 to 90 (DGTTT), G413, 477 to 479 (NAA), and D493.

It belongs to the chaperonin (HSP60) family. In terms of assembly, forms a cylinder of 14 subunits composed of two heptameric rings stacked back-to-back. Interacts with the co-chaperonin GroES.

It localises to the cytoplasm. It carries out the reaction ATP + H2O + a folded polypeptide = ADP + phosphate + an unfolded polypeptide.. Together with its co-chaperonin GroES, plays an essential role in assisting protein folding. The GroEL-GroES system forms a nano-cage that allows encapsulation of the non-native substrate proteins and provides a physical environment optimized to promote and accelerate protein folding. The protein is Chaperonin GroEL of Beutenbergia cavernae (strain ATCC BAA-8 / DSM 12333 / CCUG 43141 / JCM 11478 / NBRC 16432 / NCIMB 13614 / HKI 0122).